Reading from the N-terminus, the 690-residue chain is Serotransferrin-1 (690 aa).

A signal peptide spans 1-18; it reads MKLLLLSALLGCLATAYA. Transferrin-like domains are found at residues 25-329 and 340-669; these read VKWC…SLKK and IKWC…SLRK. Cysteine 28 and cysteine 50 are oxidised to a cystine. Residues aspartate 74 and tyrosine 104 each coordinate Fe(3+). 3 disulfides stabilise this stretch: cysteine 127-cysteine 207, cysteine 172-cysteine 186, and cysteine 235-cysteine 249. Residues threonine 129, serine 134, glycine 136, and tryptophan 137 each contribute to the hydrogencarbonate site. Asparagine 169 is a glycosylation site (N-linked (GlcNAc...) asparagine). Residue tyrosine 201 participates in Fe(3+) binding. Histidine 257 provides a ligand contact to Fe(3+). Intrachain disulfides connect cysteine 343/cysteine 379 and cysteine 353/cysteine 370. Residues aspartate 394 and tyrosine 428 each coordinate Fe(3+). 7 cysteine pairs are disulfide-bonded: cysteine 404/cysteine 681, cysteine 419/cysteine 642, cysteine 451/cysteine 529, cysteine 475/cysteine 670, cysteine 485/cysteine 499, cysteine 496/cysteine 512, and cysteine 569/cysteine 583. Hydrogencarbonate-binding residues include threonine 453, arginine 457, alanine 459, and glycine 460. Tyrosine 523 is a Fe(3+) binding site. Histidine 591 contributes to the Fe(3+) binding site.

The protein belongs to the transferrin family. As to quaternary structure, monomer. Abundant in liver and serum with smaller amounts found in the stomach and kidney.

Its subcellular location is the secreted. Its function is as follows. Transferrins are iron binding transport proteins which can bind two Fe(3+) ions in association with the binding of an anion, usually bicarbonate. It is responsible for the transport of iron from sites of absorption and heme degradation to those of storage and utilization. Serum transferrin may also have a further role in stimulating cell proliferation. The protein is Serotransferrin-1 (tf1) of Salmo salar (Atlantic salmon).